The chain runs to 329 residues: MADLLSVLQDKLSGKNVKIVLPEGEDERVLIAATQLQKTDYVSPIVLGNEDNIKSLASKHALDLTQIEIIDPATSELKDELVDAFVERRKGKATKEQAVELLDNVNYFGTMLVYTGKAEGLVSGAAHSTGDTVRPALQIIKTKPGVSRTSGIFFMIKGDEQYIFGDCAINPELDAQGLAEIAVESAKSAQSFGMNPKVAMLSFSTKGSAKSDDVTKVQEALKLAQEKAEADQLEHVVIDGEFQFDAAIVPSVAEKKAPGAKIQGDANVFVFPSLEAGNIGYKIAQRLGGYDAVGPVLQGLNSPVNDLSRGCSTEDVYNLSIITAAQALQ.

This sequence belongs to the phosphate acetyltransferase and butyryltransferase family.

It localises to the cytoplasm. It carries out the reaction acetyl-CoA + phosphate = acetyl phosphate + CoA. Its pathway is metabolic intermediate biosynthesis; acetyl-CoA biosynthesis; acetyl-CoA from acetate: step 2/2. This Staphylococcus epidermidis (strain ATCC 35984 / DSM 28319 / BCRC 17069 / CCUG 31568 / BM 3577 / RP62A) protein is Phosphate acetyltransferase (pta).